A 526-amino-acid chain; its full sequence is Butyrophilin subfamily 1 member A1 (526 aa).

The signal sequence occupies residues 1–26; it reads MAVFPNSCLAGCLLIFILLQLPKLDS. 2 Ig-like V-type domains span residues 27–140 and 148–234; these read APFD…VHLK and PHIS…VEVS. The Extracellular portion of the chain corresponds to 27–242; the sequence is APFDVIGPQE…VSIPASFFPR (216 aa). 2 cysteine pairs are disulfide-bonded: Cys50–Cys124 and Cys164–Cys218. Residue Asn55 is glycosylated (N-linked (GlcNAc...) (complex) asparagine). Asn215 carries an N-linked (GlcNAc...) (hybrid) asparagine glycan. Residues 243–269 form a helical membrane-spanning segment; that stretch reads LTPWMVAVAVILVVLGLLTIGSIFFTW. The Cytoplasmic portion of the chain corresponds to 270 to 526; it reads RLYKERSRQR…IPLQPSQGVP (257 aa). One can recognise a B30.2/SPRY domain in the interval 285–479; that stretch reads SKEKLLEELK…LTICPVTDGL (195 aa).

This sequence belongs to the immunoglobulin superfamily. BTN/MOG family. Seems to associate with xanthine dehydrogenase/oxidase. In terms of tissue distribution, expressed in mammary tissue.

The protein localises to the membrane. May function in the secretion of milk-fat droplets. May act as a specific membrane-associated receptor for the association of cytoplasmic droplets with the apical plasma membrane. Inhibits the proliferation of CD4 and CD8 T-cells activated by anti-CD3 antibodies, T-cell metabolism and IL2 and IFNG secretion. The polypeptide is Butyrophilin subfamily 1 member A1 (BTN1A1) (Bos taurus (Bovine)).